The primary structure comprises 241 residues: ATP synthase subunit a (241 aa).

Transmembrane regions (helical) follow at residues 30–50, 91–111, 128–148, 193–213, and 214–234; these read GQVFLTSWILLGALLVFISLG, FIGTLFLFVFVSNWGGALIPW, INTTIALALLVSLSYFYAGLS, LVVGVLVFLVPLILPIPVMFL, and GLFTSAIQALIFATLAAYYIG.

The protein belongs to the ATPase A chain family. As to quaternary structure, F-type ATPases have 2 components, CF(1) - the catalytic core - and CF(0) - the membrane proton channel. CF(1) has five subunits: alpha(3), beta(3), gamma(1), delta(1), epsilon(1). CF(0) has four main subunits: a, b, b' and c.

Its subcellular location is the cellular thylakoid membrane. Key component of the proton channel; it plays a direct role in the translocation of protons across the membrane. In Prochlorococcus marinus (strain MIT 9301), this protein is ATP synthase subunit a.